A 371-amino-acid polypeptide reads, in one-letter code: uncharacterized protein (371 aa).

This sequence belongs to the serpin family.

This is an uncharacterized protein from Pyrobaculum aerophilum (strain ATCC 51768 / DSM 7523 / JCM 9630 / CIP 104966 / NBRC 100827 / IM2).